A 166-amino-acid chain; its full sequence is MKYTSYFLALQLCLLLGFSGSYGQGPFFKEIENLKEYFNASNPDVATGGPLFLEILKNWKEESDKKIIQSQIVSFYFKLFENFKDDQVIQRSMDIIKQDMFQKFLNGSSEKLEDFKKLIQIPVDDLQIQRKAINELIKVMNDLLPKSNLRKRKRSQNLFRGRRAST.

A signal peptide spans 1-23 (MKYTSYFLALQLCLLLGFSGSYG). Gln-24 is modified (pyrrolidone carboxylic acid). N-linked (GlcNAc...) asparagine glycans are attached at residues Asn-39 and Asn-106.

The protein belongs to the type II (or gamma) interferon family. In terms of assembly, homodimer. Interacts with IFNGR1 (via extracellular domain); this interaction promotes IFNGR1 dimerization. As to expression, released primarily from activated T lymphocytes.

The protein localises to the secreted. Type II interferon produced by immune cells such as T-cells and NK cells that plays crucial roles in antimicrobial, antiviral, and antitumor responses by activating effector immune cells and enhancing antigen presentation. Primarily signals through the JAK-STAT pathway after interaction with its receptor IFNGR1 to affect gene regulation. Upon IFNG binding, IFNGR1 intracellular domain opens out to allow association of downstream signaling components JAK2, JAK1 and STAT1, leading to STAT1 activation, nuclear translocation and transcription of IFNG-regulated genes. Many of the induced genes are transcription factors such as IRF1 that are able to further drive regulation of a next wave of transcription. Plays a role in class I antigen presentation pathway by inducing a replacement of catalytic proteasome subunits with immunoproteasome subunits. In turn, increases the quantity, quality, and repertoire of peptides for class I MHC loading. Increases the efficiency of peptide generation also by inducing the expression of activator PA28 that associates with the proteasome and alters its proteolytic cleavage preference. Up-regulates as well MHC II complexes on the cell surface by promoting expression of several key molecules such as cathepsins B/CTSB, H/CTSH, and L/CTSL. Participates in the regulation of hematopoietic stem cells during development and under homeostatic conditions by affecting their development, quiescence, and differentiation. The sequence is that of Interferon gamma (IFNG) from Moschus berezovskii (Chinese forest musk deer).